Here is a 231-residue protein sequence, read N- to C-terminus: Septum site-determining protein MinC (231 aa).

Belongs to the MinC family. As to quaternary structure, interacts with MinD and FtsZ.

In terms of biological role, cell division inhibitor that blocks the formation of polar Z ring septums. Rapidly oscillates between the poles of the cell to destabilize FtsZ filaments that have formed before they mature into polar Z rings. Prevents FtsZ polymerization. This is Septum site-determining protein MinC from Shigella flexneri.